The chain runs to 754 residues: Deadenylation-dependent mRNA-decapping factor pdc2 (754 aa).

The segment at 499–754 (LESIWKALYI…MGLDARQLSA (256 aa)) is interaction with lsm1.

It belongs to the PAT1 family. As to quaternary structure, interacts with dcp2. Interacts with lsm1; via C-terminus.

The protein resides in the cytoplasm. The protein localises to the nucleus. Its subcellular location is the P-body. Its function is as follows. Activator of decapping that functions as a general and active mechanism of translational repression and required for P-body formation. Stabilizes the 3' terminus of mRNAs and modulates the rates of mRNA-decapping that occur following deadenylation. Might be required for promoting the formation or the stabilization of the preinitiation translation complexes. Necessary for accurate chromosome transmission during cell division. Together with lsm1, recruits the deadenylase ccr4 to P-bodies. In Schizosaccharomyces pombe (strain 972 / ATCC 24843) (Fission yeast), this protein is Deadenylation-dependent mRNA-decapping factor pdc2.